A 290-amino-acid polypeptide reads, in one-letter code: MTLPFRDDLLSSLLARCKTVPLSRFSQPLFWLLLLLLAHQCAGLTWRLLDLGSQQSSQPWQPAVAGSQGQGKARLDLGGVSRLALFGKAKQQARAADAVAADAPKTQLNAQLNGVLASSDPAKSIAIIAHSGVQNSYGIGDFIDGTQAKVRQVFADRVIIERDARDETLMLDGEEYGKPLPKQGNPDEKLSSVRSELLGNPGKITDYLNISPVRVDGRMVGYRLNPGSNPELFNQLGLVANDMAVSINGLDLRDNAQAMQAMQQVAGATEMTVTVERQGQLYDVYVGLSE.

Over 1–28 (MTLPFRDDLLSSLLARCKTVPLSRFSQP) the chain is Cytoplasmic. Residues 29-46 (LFWLLLLLLAHQCAGLTW) traverse the membrane as a helical segment. The Periplasmic portion of the chain corresponds to 47-290 (RLLDLGSQQS…LYDVYVGLSE (244 aa)).

It belongs to the GSP C family.

The protein localises to the cell inner membrane. Its function is as follows. Involved in a type II secretion system (T2SS, formerly general secretion pathway, GSP) for the export of proteins. The polypeptide is Type II secretion system protein C (exeC) (Aeromonas salmonicida).